Consider the following 202-residue polypeptide: uncharacterized protein (202 aa).

The region spanning 1 to 78 (MKLVGSYTSP…YIELMNVAPA (78 aa)) is the GST N-terminal domain. Glutathione-binding positions include Ser9, Val49, and 62–63 (DS). In terms of domain architecture, GST C-terminal spans 83-202 (DPLESLRVRK…SFARTEPPKA (120 aa)).

Belongs to the GST superfamily. HSP26 family.

In terms of biological role, glutathione (GSH) transferase homolog, that might be involved in selenium metabolism. This is an uncharacterized protein from Escherichia coli (strain K12).